Consider the following 251-residue polypeptide: Small ribosomal subunit protein uS2 (251 aa).

It belongs to the universal ribosomal protein uS2 family.

This chain is Small ribosomal subunit protein uS2, found in Nitrosomonas eutropha (strain DSM 101675 / C91 / Nm57).